The following is a 355-amino-acid chain: UDP-N-acetylglucosamine--N-acetylmuramyl-(pentapeptide) pyrophosphoryl-undecaprenol N-acetylglucosamine transferase (355 aa).

UDP-N-acetyl-alpha-D-glucosamine is bound by residues 15-17 (TGG), N127, R163, S191, I244, 263-268 (ALTVSE), and Q288.

Belongs to the glycosyltransferase 28 family. MurG subfamily.

The protein localises to the cell inner membrane. The catalysed reaction is di-trans,octa-cis-undecaprenyl diphospho-N-acetyl-alpha-D-muramoyl-L-alanyl-D-glutamyl-meso-2,6-diaminopimeloyl-D-alanyl-D-alanine + UDP-N-acetyl-alpha-D-glucosamine = di-trans,octa-cis-undecaprenyl diphospho-[N-acetyl-alpha-D-glucosaminyl-(1-&gt;4)]-N-acetyl-alpha-D-muramoyl-L-alanyl-D-glutamyl-meso-2,6-diaminopimeloyl-D-alanyl-D-alanine + UDP + H(+). The protein operates within cell wall biogenesis; peptidoglycan biosynthesis. Functionally, cell wall formation. Catalyzes the transfer of a GlcNAc subunit on undecaprenyl-pyrophosphoryl-MurNAc-pentapeptide (lipid intermediate I) to form undecaprenyl-pyrophosphoryl-MurNAc-(pentapeptide)GlcNAc (lipid intermediate II). In Citrobacter koseri (strain ATCC BAA-895 / CDC 4225-83 / SGSC4696), this protein is UDP-N-acetylglucosamine--N-acetylmuramyl-(pentapeptide) pyrophosphoryl-undecaprenol N-acetylglucosamine transferase.